The sequence spans 335 residues: Cathepsin B-like cysteine proteinase 4 (335 aa).

A signal peptide spans Met-1–Gly-15. A propeptide spanning residues Leu-16 to Thr-80 is cleaved from the precursor. Cystine bridges form between Cys-94/Cys-123, Cys-106/Cys-150, Cys-142/Cys-209, Cys-143/Cys-146, Cys-179/Cys-213, and Cys-187/Cys-199. Cys-109 is a catalytic residue. The N-linked (GlcNAc...) asparagine glycan is linked to Asn-193. Residues His-281 and Asn-301 contribute to the active site.

This sequence belongs to the peptidase C1 family.

Its subcellular location is the secreted. Functionally, thiol protease which shows activity against the fluorogenic substrate z-Arg-Arg-AMC. The polypeptide is Cathepsin B-like cysteine proteinase 4 (cpr-4) (Caenorhabditis elegans).